Reading from the N-terminus, the 192-residue chain is uncharacterized protein (192 aa).

The Nudix hydrolase domain maps to 29-160; that stretch reads QRQAAVLVPI…PLDIERKQQR (132 aa). The Nudix box motif lies at 67–89; that stretch reads GAADKTDRSIIETALREAQEEVA. Mg(2+)-binding residues include glutamate 83 and glutamate 87.

This sequence belongs to the Nudix hydrolase family. PCD1 subfamily. Mn(2+) is required as a cofactor. It depends on Mg(2+) as a cofactor.

Functionally, probably mediates the hydrolysis of some nucleoside diphosphate derivatives. This is an uncharacterized protein from Pectobacterium atrosepticum (strain SCRI 1043 / ATCC BAA-672) (Erwinia carotovora subsp. atroseptica).